The following is a 355-amino-acid chain: Glycerol-1-phosphate dehydrogenase [NAD(P)+] (355 aa).

Residues 101–105 (GKSID) and 123–126 (TAAS) each bind NAD(+). Position 128 (Asp-128) interacts with substrate. Residue Ser-132 participates in NAD(+) binding. Asp-175 contacts substrate. Asp-175 and His-255 together coordinate Zn(2+). His-259 provides a ligand contact to substrate. His-271 contacts Zn(2+).

This sequence belongs to the glycerol-1-phosphate dehydrogenase family. In terms of assembly, homodimer. Zn(2+) is required as a cofactor.

It is found in the cytoplasm. It catalyses the reaction sn-glycerol 1-phosphate + NAD(+) = dihydroxyacetone phosphate + NADH + H(+). It carries out the reaction sn-glycerol 1-phosphate + NADP(+) = dihydroxyacetone phosphate + NADPH + H(+). It participates in membrane lipid metabolism; glycerophospholipid metabolism. Functionally, catalyzes the NAD(P)H-dependent reduction of dihydroxyacetonephosphate (DHAP or glycerone phosphate) to glycerol 1-phosphate (G1P). The G1P thus generated is used as the glycerophosphate backbone of phospholipids in the cellular membranes of Archaea. This Staphylothermus marinus (strain ATCC 43588 / DSM 3639 / JCM 9404 / F1) protein is Glycerol-1-phosphate dehydrogenase [NAD(P)+].